A 344-amino-acid polypeptide reads, in one-letter code: Photosystem II protein D1 (344 aa).

Thr2 bears the N-acetylthreonine mark. Residue Thr2 is modified to Phosphothreonine. Transmembrane regions (helical) follow at residues 29-46 (YIGW…TATS), 118-133 (HFFL…EWEL), and 142-156 (WIAV…AATA). His118 contributes to the chlorophyll a binding site. Tyr126 is a binding site for pheophytin a. Residues Asp170 and Glu189 each coordinate [CaMn4O5] cluster. The chain crosses the membrane as a helical span at residues 197–218 (FHMLGVAGVFGGSLFSAMHGSL). Position 198 (His198) interacts with chlorophyll a. Residues His215 and 264–265 (SF) contribute to the a quinone site. Residue His215 participates in Fe cation binding. His272 is a Fe cation binding site. A helical membrane pass occupies residues 274 to 288 (FLAAWPVIGIWFTAL). 4 residues coordinate [CaMn4O5] cluster: His332, Glu333, Asp342, and Ala344.

It belongs to the reaction center PufL/M/PsbA/D family. In terms of assembly, PSII is composed of 1 copy each of membrane proteins PsbA, PsbB, PsbC, PsbD, PsbE, PsbF, PsbH, PsbI, PsbJ, PsbK, PsbL, PsbM, PsbT, PsbX, PsbY, PsbZ, Psb30/Ycf12, at least 3 peripheral proteins of the oxygen-evolving complex and a large number of cofactors. It forms dimeric complexes. It depends on The D1/D2 heterodimer binds P680, chlorophylls that are the primary electron donor of PSII, and subsequent electron acceptors. It shares a non-heme iron and each subunit binds pheophytin, quinone, additional chlorophylls, carotenoids and lipids. D1 provides most of the ligands for the Mn4-Ca-O5 cluster of the oxygen-evolving complex (OEC). There is also a Cl(-1) ion associated with D1 and D2, which is required for oxygen evolution. The PSII complex binds additional chlorophylls, carotenoids and specific lipids. as a cofactor. Tyr-161 forms a radical intermediate that is referred to as redox-active TyrZ, YZ or Y-Z.

The protein resides in the plastid. It localises to the chloroplast thylakoid membrane. It catalyses the reaction 2 a plastoquinone + 4 hnu + 2 H2O = 2 a plastoquinol + O2. Functionally, photosystem II (PSII) is a light-driven water:plastoquinone oxidoreductase that uses light energy to abstract electrons from H(2)O, generating O(2) and a proton gradient subsequently used for ATP formation. It consists of a core antenna complex that captures photons, and an electron transfer chain that converts photonic excitation into a charge separation. The D1/D2 (PsbA/PsbD) reaction center heterodimer binds P680, the primary electron donor of PSII as well as several subsequent electron acceptors. This is Photosystem II protein D1 from Pleurastrum terricola (Filamentous green alga).